A 492-amino-acid polypeptide reads, in one-letter code: RNase aCSPSF2 (492 aa).

A divalent metal cation contacts are provided by His130, His132, Asp134, His135, His213, Asp234, and His460.

Belongs to the metallo-beta-lactamase superfamily. RNA-metabolizing metallo-beta-lactamase-like family. Requires Mg(2+) as cofactor.

Its function is as follows. A 5'-3' exoribonuclease, more active on 5'-monophosphorylated and 5'-hydroxylated RNA than 5'-tri-phosphorylated RNA; note there is no evidence for accumulation of 5'-monophosphorylated RNA in this organism. Translation initiation factor 2 subunit gamma but not subunit alpha protects 5'-tri-phosphorylated RNA from degradation by this enzyme. This Saccharolobus solfataricus (strain ATCC 35092 / DSM 1617 / JCM 11322 / P2) (Sulfolobus solfataricus) protein is RNase aCSPSF2.